We begin with the raw amino-acid sequence, 715 residues long: Fatty acid oxidation complex subunit alpha (715 aa).

Residues 1 to 190 form an enoyl-CoA hydratase region; that stretch reads MTTTSAFMLN…KAGLVDDVVP (190 aa). The interval 306 to 715 is 3-hydroxyacyl-CoA dehydrogenase; the sequence is GPLNSVGILG…WTNGETDQGN (410 aa).

This sequence in the N-terminal section; belongs to the enoyl-CoA hydratase/isomerase family. It in the central section; belongs to the 3-hydroxyacyl-CoA dehydrogenase family. Heterotetramer of two alpha chains (FadJ) and two beta chains (FadI).

It localises to the cytoplasm. The enzyme catalyses a (3S)-3-hydroxyacyl-CoA = a (2E)-enoyl-CoA + H2O. It carries out the reaction a 4-saturated-(3S)-3-hydroxyacyl-CoA = a (3E)-enoyl-CoA + H2O. It catalyses the reaction a (3S)-3-hydroxyacyl-CoA + NAD(+) = a 3-oxoacyl-CoA + NADH + H(+). The catalysed reaction is (3S)-3-hydroxybutanoyl-CoA = (3R)-3-hydroxybutanoyl-CoA. It functions in the pathway lipid metabolism; fatty acid beta-oxidation. Catalyzes the formation of a hydroxyacyl-CoA by addition of water on enoyl-CoA. Also exhibits 3-hydroxyacyl-CoA epimerase and 3-hydroxyacyl-CoA dehydrogenase activities. The polypeptide is Fatty acid oxidation complex subunit alpha (Salmonella dublin (strain CT_02021853)).